Consider the following 605-residue polypeptide: Glucose oxidase (605 aa).

A signal peptide spans 1 to 16 (MKTILSSSLVVSMAAA). FAD is bound by residues Leu51 and Thr52. The N-linked (GlcNAc...) asparagine glycan is linked to Asn65. Residue Glu72 coordinates FAD. N-linked (GlcNAc...) asparagine glycosylation occurs at Asn111. Residues Ser125, Asn129, Gly130, and Thr132 each contribute to the FAD site. Residues Cys186 and Cys228 are joined by a disulfide bond. N-linked (GlcNAc...) asparagine glycosylation occurs at Asn190. Val272 is a binding site for FAD. Asn280, Asn377, Asn410, and Asn495 each carry an N-linked (GlcNAc...) asparagine glycan. His538 (proton acceptor) is an active-site residue. Residues Arg559 and Val560 each coordinate O2. FAD is bound by residues Gly571 and Met583.

The protein belongs to the GMC oxidoreductase family. As to quaternary structure, homodimer. FAD is required as a cofactor.

Its subcellular location is the secreted. It localises to the cell wall. The protein resides in the cytoplasm. The protein localises to the extracellular space. It is found in the extracellular matrix. It catalyses the reaction beta-D-glucose + O2 = D-glucono-1,5-lactone + H2O2. In terms of biological role, glucose oxidase catalyzes the oxidation of beta-D-glucose to D-glucono-delta-lactone and hydrogen peroxide in the presence of molecular oxygen. Acts as a critical factor modulating pathogenicity by controlling transcription of genes important for fungal secondary metabolism and infection such as those coding for enzymes involved in degradation of the host cell wall. This is Glucose oxidase from Aspergillus carbonarius (strain ITEM 5010).